The sequence spans 226 residues: Peroxynitrite isomerase (226 aa).

The GXWXGXG signature appears at 21-27 (GSWEGQG). H191 contributes to the heme b binding site. The segment at 201–226 (SAAEGRLAPGAERPRGAGGRKQGEQS) is disordered.

Belongs to the nitrobindin family. Homodimer. Heme b serves as cofactor.

It carries out the reaction peroxynitrite = nitrate. It functions in the pathway nitrogen metabolism. In terms of biological role, heme-binding protein able to scavenge peroxynitrite and to protect free L-tyrosine against peroxynitrite-mediated nitration, by acting as a peroxynitrite isomerase that converts peroxynitrite to nitrate. Therefore, this protein likely plays a role in peroxynitrite sensing and in the detoxification of reactive nitrogen and oxygen species (RNS and ROS, respectively). Is able to bind nitric oxide (NO) in vitro, but may act as a sensor of peroxynitrite levels in vivo. The protein is Peroxynitrite isomerase of Micrococcus luteus (strain ATCC 4698 / DSM 20030 / JCM 1464 / CCM 169 / CCUG 5858 / IAM 1056 / NBRC 3333 / NCIMB 9278 / NCTC 2665 / VKM Ac-2230) (Micrococcus lysodeikticus).